Here is a 152-residue protein sequence, read N- to C-terminus: Ribosomal RNA large subunit methyltransferase H (152 aa).

S-adenosyl-L-methionine contacts are provided by residues leucine 69, glycine 96, and 118–123 (FGKLTF).

It belongs to the RNA methyltransferase RlmH family. As to quaternary structure, homodimer.

It is found in the cytoplasm. The catalysed reaction is pseudouridine(1915) in 23S rRNA + S-adenosyl-L-methionine = N(3)-methylpseudouridine(1915) in 23S rRNA + S-adenosyl-L-homocysteine + H(+). Specifically methylates the pseudouridine at position 1915 (m3Psi1915) in 23S rRNA. This Mesomycoplasma hyopneumoniae (strain 232) (Mycoplasma hyopneumoniae) protein is Ribosomal RNA large subunit methyltransferase H.